We begin with the raw amino-acid sequence, 585 residues long: Amyloid protein-binding protein 2 (585 aa).

TPR repeat units lie at residues 50-83 (QGRLCQLGSEFCELEVFAKVLRALDKRHLLHHCF), 120-153 (IQVGFVLGGFLSDAGWYSDAEKVFLSCLQLCTLH), 206-239 (AALYGELCALLFAKSHYDEAYKWCIEAMKEITAG), 288-321 (SDTLLDYGFYLLNVDNICQSVAIYQAALDIRQSV), 333-367 (HEDLAYSSYVHQYSSGKFDNALFHAERAIGIITHI), 429-462 (AKHYGNLGRLYQSMRKFKEAEEMHIKAIQIKEQL), 471-505 (ALSVGHLASLYNYDMNQYENAEKLYLRSIAIGKKL), and 514-547 (EYDYRGLIKLYNSIGNYEKVFEYHNVLSNWNRLR).

Component of a CRL2 E3 ubiquitin-protein ligase complex, also named ECS (Elongin BC-CUL2/5-SOCS-box protein) complex, composed of CUL2, Elongin BC (ELOB and ELOC), RBX1 and substrate-specific adapter APPBP2. Interacts with APP; APP interaction inhibits the E3 ubiquitin-protein ligase activity of the CRL2(APPBP2) complex. Post-translationally, rapidly degraded by the proteasome upon overexpression of a C-terminal fragment of APP.

Its subcellular location is the nucleus. It localises to the cytoplasm. The protein localises to the cytoskeleton. It is found in the membrane. Its pathway is protein modification; protein ubiquitination. Its activity is regulated as follows. E3 ubiquitin-protein ligase activity of the CRL2(APPBP2) complex is inhibited by APP. Functionally, substrate-recognition component of a Cul2-RING (CRL2) E3 ubiquitin-protein ligase complex of the DesCEND (destruction via C-end degrons) pathway, which recognizes a C-degron located at the extreme C terminus of target proteins, leading to their ubiquitination and degradation. The C-degron recognized by the DesCEND pathway is usually a motif of less than ten residues and can be present in full-length proteins, truncated proteins or proteolytically cleaved forms. The CRL2(APPBP2) complex specifically recognizes proteins with a -Arg-Xaa-Xaa-Gly degron at the C-terminus, leading to their ubiquitination and degradation. The CRL2(APPBP2) complex mediates ubiquitination and degradation of truncated SELENOV selenoproteins produced by failed UGA/Sec decoding, which end with a -Arg-Xaa-Xaa-Gly degron. May play a role in intracellular protein transport: may be involved in the translocation of APP along microtubules toward the cell surface. The chain is Amyloid protein-binding protein 2 from Homo sapiens (Human).